Reading from the N-terminus, the 297-residue chain is 4-hydroxy-tetrahydrodipicolinate synthase (297 aa).

Thr-47 provides a ligand contact to pyruvate. Catalysis depends on Tyr-136, which acts as the Proton donor/acceptor. The active-site Schiff-base intermediate with substrate is the Lys-165. Thr-206 contributes to the pyruvate binding site.

The protein belongs to the DapA family. Homotetramer; dimer of dimers.

Its subcellular location is the cytoplasm. The enzyme catalyses L-aspartate 4-semialdehyde + pyruvate = (2S,4S)-4-hydroxy-2,3,4,5-tetrahydrodipicolinate + H2O + H(+). It functions in the pathway amino-acid biosynthesis; L-lysine biosynthesis via DAP pathway; (S)-tetrahydrodipicolinate from L-aspartate: step 3/4. Functionally, catalyzes the condensation of (S)-aspartate-beta-semialdehyde [(S)-ASA] and pyruvate to 4-hydroxy-tetrahydrodipicolinate (HTPA). The protein is 4-hydroxy-tetrahydrodipicolinate synthase of Sulfurovum sp. (strain NBC37-1).